Consider the following 146-residue polypeptide: Hemoglobin subunit beta (146 aa).

Valine 1 carries the post-translational modification N-acetylvaline. A Globin domain is found at 2–146 (HLSDGEKNAI…VANALAHKYH (145 aa)). Serine 44 is subject to Phosphoserine. Lysine 59 is subject to N6-acetyllysine. A heme b-binding site is contributed by histidine 63. Lysine 82 bears the N6-acetyllysine mark. Residue histidine 92 coordinates heme b. Residue cysteine 93 is modified to S-nitrosocysteine. Lysine 144 is subject to N6-acetyllysine.

It belongs to the globin family. In terms of assembly, heterotetramer of two alpha chains and two beta chains. In terms of tissue distribution, red blood cells.

Its function is as follows. Involved in oxygen transport from the lung to the various peripheral tissues. The polypeptide is Hemoglobin subunit beta (HBB) (Spermophilus citellus (European ground squirrel)).